The primary structure comprises 136 residues: Large-conductance mechanosensitive channel (136 aa).

The next 4 helical transmembrane spans lie at 9-29, 32-52, 54-74, and 79-99; these read AFAS…GAAF, IVSS…LGGV, FSDL…VVIA, and IQTV…LKAI.

Belongs to the MscL family. Homopentamer.

The protein resides in the cell inner membrane. Functionally, channel that opens in response to stretch forces in the membrane lipid bilayer. May participate in the regulation of osmotic pressure changes within the cell. In Vibrio cholerae serotype O1 (strain ATCC 39541 / Classical Ogawa 395 / O395), this protein is Large-conductance mechanosensitive channel.